The following is a 347-amino-acid chain: Very-long-chain 3-oxoacyl-CoA reductase (347 aa).

Residues 20–40 (LLWVVFGLGVLKCTTLSLRFL) traverse the membrane as a helical segment. Val-66, Asp-120, Asn-147, Tyr-223, Lys-227, Val-256, and Ser-258 together coordinate NADP(+). Residue Tyr-223 is the Proton donor of the active site. The Lowers pKa of active site Tyr role is filled by Lys-227.

This sequence belongs to the short-chain dehydrogenases/reductases (SDR) family. In terms of assembly, interacts with the fatty acid elongation system components ELO3 and TSC13.

Its subcellular location is the endoplasmic reticulum membrane. It carries out the reaction a very-long-chain (3R)-3-hydroxyacyl-CoA + NADP(+) = a very-long-chain 3-oxoacyl-CoA + NADPH + H(+). It participates in lipid metabolism; fatty acid biosynthesis. Functionally, component of the microsomal membrane bound fatty acid elongation system, which produces the 26-carbon very long-chain fatty acids (VLCFA) from palmitate. Catalyzes the reduction of the 3-ketoacyl-CoA intermediate that is formed in each cycle of fatty acid elongation. VLCFAs serve as precursors for ceramide and sphingolipids. The polypeptide is Very-long-chain 3-oxoacyl-CoA reductase (Saccharomyces cerevisiae (strain RM11-1a) (Baker's yeast)).